The chain runs to 491 residues: Putative F-box/LRR-repeat protein At3g59230 (491 aa).

Residues 11 to 57 (KDIINSLPEALIYHILSFLSTKEAAITSLLSRKWRYFFAFVPNLDFD) enclose the F-box domain. LRR repeat units lie at residues 127–154 (LSIA…RIEA), 156–182 (NGLA…YLDS), 184–209 (ELDY…VMID), 325–351 (ASTV…TIES), 352–377 (NTKV…VFQG), 419–444 (NDKT…NIYY), and 472–491 (VQVI…SSSI).

This Arabidopsis thaliana (Mouse-ear cress) protein is Putative F-box/LRR-repeat protein At3g59230.